The sequence spans 156 residues: Ribosome maturation factor RimP (156 aa).

It belongs to the RimP family.

The protein resides in the cytoplasm. Its function is as follows. Required for maturation of 30S ribosomal subunits. The protein is Ribosome maturation factor RimP of Bacillus subtilis (strain 168).